A 198-amino-acid chain; its full sequence is Fimbriae W protein (198 aa).

An HTH luxR-type domain is found at 127–192 (HYCTTRHFSV…QFLKYIRVNL (66 aa)).

The protein localises to the fimbrium. This Salmonella typhimurium (strain LT2 / SGSC1412 / ATCC 700720) protein is Fimbriae W protein (fimW).